Reading from the N-terminus, the 226-residue chain is Orotate phosphoribosyltransferase (226 aa).

5-phospho-alpha-D-ribose 1-diphosphate contacts are provided by residues Arg107, Lys108, Lys111, and 133–141; that span reads EDLTTDGGS. Orotate is bound at residue Thr137.

The protein belongs to the purine/pyrimidine phosphoribosyltransferase family. PyrE subfamily. Homodimer. Mg(2+) is required as a cofactor.

It carries out the reaction orotidine 5'-phosphate + diphosphate = orotate + 5-phospho-alpha-D-ribose 1-diphosphate. Its pathway is pyrimidine metabolism; UMP biosynthesis via de novo pathway; UMP from orotate: step 1/2. Catalyzes the transfer of a ribosyl phosphate group from 5-phosphoribose 1-diphosphate to orotate, leading to the formation of orotidine monophosphate (OMP). The chain is Orotate phosphoribosyltransferase from Ruegeria sp. (strain TM1040) (Silicibacter sp.).